The primary structure comprises 176 residues: NAD(P)H-quinone oxidoreductase subunit 6, chloroplastic (176 aa).

A run of 5 helical transmembrane segments spans residues 10–30 (FILVFLGLVLILGGLAVVLLP), 32–52 (PIYSAFSLGLVLVCISLLYIL), 61–81 (AQLLIYVGAINVLIIFAVMFL), 95–115 (VGDGVTSVVCTSLFASLITTI), and 152–172 (FLIPFELISIILLVALIGAIA).

This sequence belongs to the complex I subunit 6 family. NDH is composed of at least 16 different subunits, 5 of which are encoded in the nucleus.

It is found in the plastid. The protein localises to the chloroplast thylakoid membrane. The enzyme catalyses a plastoquinone + NADH + (n+1) H(+)(in) = a plastoquinol + NAD(+) + n H(+)(out). It carries out the reaction a plastoquinone + NADPH + (n+1) H(+)(in) = a plastoquinol + NADP(+) + n H(+)(out). In terms of biological role, NDH shuttles electrons from NAD(P)H:plastoquinone, via FMN and iron-sulfur (Fe-S) centers, to quinones in the photosynthetic chain and possibly in a chloroplast respiratory chain. The immediate electron acceptor for the enzyme in this species is believed to be plastoquinone. Couples the redox reaction to proton translocation, and thus conserves the redox energy in a proton gradient. In Trachelium caeruleum (Blue throatwort), this protein is NAD(P)H-quinone oxidoreductase subunit 6, chloroplastic (ndhG).